The primary structure comprises 221 residues: RNA pyrophosphohydrolase (221 aa).

The Nudix hydrolase domain maps to 6–149 (GFRPNVGIVL…KRSVYALALT (144 aa)). Positions 38–59 (GGIDRGETPEQAMFRELHEEVG) match the Nudix box motif.

This sequence belongs to the Nudix hydrolase family. RppH subfamily. Requires a divalent metal cation as cofactor.

In terms of biological role, accelerates the degradation of transcripts by removing pyrophosphate from the 5'-end of triphosphorylated RNA, leading to a more labile monophosphorylated state that can stimulate subsequent ribonuclease cleavage. The polypeptide is RNA pyrophosphohydrolase (Verminephrobacter eiseniae (strain EF01-2)).